The sequence spans 29 residues: Sarcolamban B (29 aa).

Residues 7–27 (LFTTFLILAFLLFLLYAFYEA) traverse the membrane as a helical segment.

Interacts with SERCA. In terms of tissue distribution, strongly expressed in embryonic and larval somatic muscles and postembryonic heart.

It is found in the sarcoplasmic reticulum membrane. Its function is as follows. Plays an essential role in the regulation of calcium transport at the sarcoplasmic reticulum (SR), which is secondarily required for regular muscle contraction. The chain is Sarcolamban B from Drosophila melanogaster (Fruit fly).